Reading from the N-terminus, the 530-residue chain is T-complex protein 1 subunit zeta (530 aa).

Residue Gly38 coordinates ADP. Gly38 contributes to the ATP binding site. Asp89 is a binding site for Mg(2+). The ADP site is built by Gly90, Thr91, Thr92, Ser93, Thr157, Lys158, and Ala410. 3 residues coordinate ATP: Gly90, Thr91, and Thr92. Residues Ala410, Gly411, Asp495, and Lys500 each coordinate ATP. ADP is bound at residue Asp495.

As to quaternary structure, component of the chaperonin-containing T-complex (TRiC), a hexadecamer composed of two identical back-to-back stacked rings enclosing a protein folding chamber. Each ring is made up of eight different subunits: TCP1/CCT1, CCT2, CCT3, CCT4, CCT5, CCT6A/CCT6, CCT7, CCT8. Interacts with PACRG.

It is found in the cytoplasm. It catalyses the reaction ATP + H2O = ADP + phosphate + H(+). Functionally, component of the chaperonin-containing T-complex (TRiC), a molecular chaperone complex that assists the folding of actin, tubulin and other proteins upon ATP hydrolysis. This chain is T-complex protein 1 subunit zeta, found in Gallus gallus (Chicken).